Here is a 534-residue protein sequence, read N- to C-terminus: Glucans biosynthesis protein D (534 aa).

The tat-type signal signal peptide spans 1–30 (MRMQRRHLLKNAAAALAALGLPALPQWALA).

It belongs to the OpgD/OpgG family. Post-translationally, predicted to be exported by the Tat system. The position of the signal peptide cleavage has not been experimentally proven.

It is found in the periplasm. It functions in the pathway glycan metabolism; osmoregulated periplasmic glucan (OPG) biosynthesis. In terms of biological role, probably involved in the control of the structural glucose backbone of osmoregulated periplasmic glucans (OPGs). In Xanthomonas oryzae pv. oryzae (strain KACC10331 / KXO85), this protein is Glucans biosynthesis protein D.